A 130-amino-acid polypeptide reads, in one-letter code: Cytidine deaminase (130 aa).

The CMP/dCMP-type deaminase domain occupies 3–130 (VNLEWIIKQL…ELLMNGFKKS (128 aa)). 43–45 (NIE) contacts substrate. Cys-54 contacts Zn(2+). Catalysis depends on Glu-56, which acts as the Proton donor. Zn(2+) is bound by residues Cys-88 and Cys-91.

Belongs to the cytidine and deoxycytidylate deaminase family. Homodimer. Requires Zn(2+) as cofactor.

The enzyme catalyses cytidine + H2O + H(+) = uridine + NH4(+). The catalysed reaction is 2'-deoxycytidine + H2O + H(+) = 2'-deoxyuridine + NH4(+). Functionally, this enzyme scavenges exogenous and endogenous cytidine and 2'-deoxycytidine for UMP synthesis. The sequence is that of Cytidine deaminase (cdd) from Mycoplasma genitalium (strain ATCC 33530 / DSM 19775 / NCTC 10195 / G37) (Mycoplasmoides genitalium).